The sequence spans 74 residues: Small ribosomal subunit protein uS8c (74 aa).

Belongs to the universal ribosomal protein uS8 family. In terms of assembly, part of the 30S ribosomal subunit.

It localises to the plastid. The protein resides in the chloroplast. Its function is as follows. One of the primary rRNA binding proteins, it binds directly to 16S rRNA central domain where it helps coordinate assembly of the platform of the 30S subunit. The polypeptide is Small ribosomal subunit protein uS8c (rps8) (Oenothera ammophila (Evening primerose)).